The following is a 378-amino-acid chain: Chaperone protein DnaJ (378 aa).

One can recognise a J domain in the interval 4–68 (DFYEILGVSR…ETRARYDRFG (65 aa)). The segment at 136-218 (GGEKEIRIPH…CGGAGRKQET (83 aa)) adopts a CR-type zinc-finger fold. Zn(2+)-binding residues include Cys149, Cys152, Cys166, Cys169, Cys192, Cys195, Cys206, and Cys209. CXXCXGXG motif repeat units lie at residues 149-156 (CKTCSGSG), 166-173 (CGTCNGTG), 192-199 (CPTCNGEG), and 206-213 (CESCGGAG).

Belongs to the DnaJ family. In terms of assembly, homodimer. It depends on Zn(2+) as a cofactor.

The protein resides in the cytoplasm. Functionally, participates actively in the response to hyperosmotic and heat shock by preventing the aggregation of stress-denatured proteins and by disaggregating proteins, also in an autonomous, DnaK-independent fashion. Unfolded proteins bind initially to DnaJ; upon interaction with the DnaJ-bound protein, DnaK hydrolyzes its bound ATP, resulting in the formation of a stable complex. GrpE releases ADP from DnaK; ATP binding to DnaK triggers the release of the substrate protein, thus completing the reaction cycle. Several rounds of ATP-dependent interactions between DnaJ, DnaK and GrpE are required for fully efficient folding. Also involved, together with DnaK and GrpE, in the DNA replication of plasmids through activation of initiation proteins. The sequence is that of Chaperone protein DnaJ from Picosynechococcus sp. (strain ATCC 27264 / PCC 7002 / PR-6) (Agmenellum quadruplicatum).